The chain runs to 298 residues: Probable GTP 3',8-cyclase (298 aa).

The Radical SAM core domain maps to Lys-4–Glu-230. Arg-13 is a GTP binding site. 2 residues coordinate [4Fe-4S] cluster: Cys-20 and Cys-24. Tyr-26 contacts S-adenosyl-L-methionine. Cys-27 provides a ligand contact to [4Fe-4S] cluster. Lys-61 serves as a coordination point for GTP. Residue Gly-65 coordinates S-adenosyl-L-methionine. Thr-91 lines the GTP pocket. Ser-115 lines the S-adenosyl-L-methionine pocket. Lys-152 lines the GTP pocket. Positions 243 and 246 each coordinate [4Fe-4S] cluster. Position 248–250 (Arg-248–Arg-250) interacts with GTP. [4Fe-4S] cluster is bound at residue Cys-260.

The protein belongs to the radical SAM superfamily. MoaA family. It depends on [4Fe-4S] cluster as a cofactor.

It catalyses the reaction GTP + AH2 + S-adenosyl-L-methionine = (8S)-3',8-cyclo-7,8-dihydroguanosine 5'-triphosphate + 5'-deoxyadenosine + L-methionine + A + H(+). It participates in cofactor biosynthesis; molybdopterin biosynthesis. Its function is as follows. Catalyzes the cyclization of GTP to (8S)-3',8-cyclo-7,8-dihydroguanosine 5'-triphosphate. The protein is Probable GTP 3',8-cyclase of Methanocaldococcus jannaschii (strain ATCC 43067 / DSM 2661 / JAL-1 / JCM 10045 / NBRC 100440) (Methanococcus jannaschii).